The sequence spans 387 residues: Carboxynorspermidine/carboxyspermidine decarboxylase (387 aa).

K51 carries the N6-(pyridoxal phosphate)lysine modification. The substrate site is built by E248 and D284.

This sequence belongs to the Orn/Lys/Arg decarboxylase class-II family. NspC subfamily. Homodimer. The cofactor is pyridoxal 5'-phosphate.

It localises to the cytoplasm. It carries out the reaction carboxynorspermidine + H(+) = norspermidine + CO2. It catalyses the reaction carboxyspermidine + H(+) = spermidine + CO2. Its function is as follows. Catalyzes the decarboxylation of carboxynorspermidine and carboxyspermidine. Essential for biofilm formation. The protein is Carboxynorspermidine/carboxyspermidine decarboxylase of Vibrio cholerae serotype O1 (strain ATCC 39315 / El Tor Inaba N16961).